A 102-amino-acid polypeptide reads, in one-letter code: CRISPR-associated endoribonuclease Cas2 (102 aa).

A Mg(2+)-binding site is contributed by Asp8.

It belongs to the CRISPR-associated endoribonuclease Cas2 protein family. As to quaternary structure, homodimer, forms a heterotetramer with a Cas1 homodimer. Requires Mg(2+) as cofactor.

Functionally, CRISPR (clustered regularly interspaced short palindromic repeat), is an adaptive immune system that provides protection against mobile genetic elements (viruses, transposable elements and conjugative plasmids). CRISPR clusters contain sequences complementary to antecedent mobile elements and target invading nucleic acids. CRISPR clusters are transcribed and processed into CRISPR RNA (crRNA). Functions as a ssRNA-specific endoribonuclease. Involved in the integration of spacer DNA into the CRISPR cassette. This chain is CRISPR-associated endoribonuclease Cas2, found in Acidovorax ebreus (strain TPSY) (Diaphorobacter sp. (strain TPSY)).